The chain runs to 261 residues: Enolase-phosphatase E1 (261 aa).

Residues Asp-16 and Glu-18 each coordinate Mg(2+). Residues 150-151 and Lys-184 each bind substrate; that span reads SS. Asp-209 contributes to the Mg(2+) binding site.

The protein belongs to the HAD-like hydrolase superfamily. MasA/MtnC family. In terms of assembly, monomer. Mg(2+) is required as a cofactor.

Its subcellular location is the cytoplasm. It localises to the nucleus. It carries out the reaction 5-methylsulfanyl-2,3-dioxopentyl phosphate + H2O = 1,2-dihydroxy-5-(methylsulfanyl)pent-1-en-3-one + phosphate. It participates in amino-acid biosynthesis; L-methionine biosynthesis via salvage pathway; L-methionine from S-methyl-5-thio-alpha-D-ribose 1-phosphate: step 3/6. Its pathway is amino-acid biosynthesis; L-methionine biosynthesis via salvage pathway; L-methionine from S-methyl-5-thio-alpha-D-ribose 1-phosphate: step 4/6. Its function is as follows. Bifunctional enzyme that catalyzes the enolization of 2,3-diketo-5-methylthiopentyl-1-phosphate (DK-MTP-1-P) into the intermediate 2-hydroxy-3-keto-5-methylthiopentenyl-1-phosphate (HK-MTPenyl-1-P), which is then dephosphorylated to form the acireductone 1,2-dihydroxy-3-keto-5-methylthiopentene (DHK-MTPene). This Rattus norvegicus (Rat) protein is Enolase-phosphatase E1 (Enoph1).